Reading from the N-terminus, the 522-residue chain is Glutamyl-tRNA(Gln) amidotransferase subunit A (522 aa).

Catalysis depends on charge relay system residues Lys-88 and Ser-163. The active-site Acyl-ester intermediate is Ser-187.

This sequence belongs to the amidase family. GatA subfamily. As to quaternary structure, heterotrimer of A, B and C subunits.

It catalyses the reaction L-glutamyl-tRNA(Gln) + L-glutamine + ATP + H2O = L-glutaminyl-tRNA(Gln) + L-glutamate + ADP + phosphate + H(+). Functionally, allows the formation of correctly charged Gln-tRNA(Gln) through the transamidation of misacylated Glu-tRNA(Gln) in organisms which lack glutaminyl-tRNA synthetase. The reaction takes place in the presence of glutamine and ATP through an activated gamma-phospho-Glu-tRNA(Gln). In Paenarthrobacter aurescens (strain TC1), this protein is Glutamyl-tRNA(Gln) amidotransferase subunit A.